The chain runs to 294 residues: BOI-related E3 ubiquitin-protein ligase 1 (294 aa).

The WRD domain stretch occupies residues 168–204 (LQERVKNLYVENQIWRDLAQTNEATANNLRSNLEQVL). A coiled-coil region spans residues 183 to 212 (RDLAQTNEATANNLRSNLEQVLAQVDDLDA). The RING-type zinc finger occupies 244–281 (CKRCGELTASVLVLPCRHLCLCTVCGSSALLRTCPVCD).

In terms of assembly, interacts with the DELLA proteins GAI, RGA, RGL1, RGL2 and RGL3.

It catalyses the reaction S-ubiquitinyl-[E2 ubiquitin-conjugating enzyme]-L-cysteine + [acceptor protein]-L-lysine = [E2 ubiquitin-conjugating enzyme]-L-cysteine + N(6)-ubiquitinyl-[acceptor protein]-L-lysine.. It functions in the pathway protein degradation; proteasomal ubiquitin-dependent pathway. E3 ubiquitin-protein ligase involved in regulation of abiotic stress responses. Not involved in ubiquitination of MYB108/BOS1. Has no effect on the stability of the DELLA proteins. The protein is BOI-related E3 ubiquitin-protein ligase 1 (BRG1) of Arabidopsis thaliana (Mouse-ear cress).